Reading from the N-terminus, the 72-residue chain is Metallothionein-like protein type 2 (72 aa).

This sequence belongs to the metallothionein superfamily. Type 15 family.

Its function is as follows. Metallothioneins have a high content of cysteine residues that bind various heavy metals. This is Metallothionein-like protein type 2 from Solanum lycopersicum (Tomato).